Reading from the N-terminus, the 816-residue chain is Probable transcriptional regulator SLK2 (816 aa).

Disordered regions lie at residues 133–153 (HDPS…SQTN) and 166–189 (SFFQ…KQDD). Polar residues-rich tracts occupy residues 139–153 (LGGS…SQTN) and 166–176 (SFFQDPNNLTQ). The tract at residues 307–554 (PSESSIVYWR…DQKVGPIEAL (248 aa)) is dimerization. The Nuclear localization signal motif lies at 316-330 (RKFVTEYFSPRAKKR). Composition is skewed to polar residues over residues 644–662 (IQQE…QGTS) and 672–711 (PSIS…SGNQ). Residues 644–711 (IQQEPSRNRS…QPPSCSSGNQ (68 aa)) form a disordered region.

The protein belongs to the adn1/SEU family. Forms corepressor complexes with LUH; LUH is the transcription repressor subunit and SLK2 the specific DNA-binding adapters. Expressed in young flower meristems, ovules and the carpel margin meristem.

Its subcellular location is the nucleus. Probable transcription regulator that functions in the development of the carpel margin meristem similarly to SEUSS (SEU). In association with SEU, supports organ development from meristematic regions by facilitating auxin response and thus organ initiation, and by sustaining meristematic potential through the maintenance of PHABULOSA expression. DNA-binding adapter subunit of the SEU-SLK2 transcriptional corepressor of abiotic stress (e.g. salt and osmotic stress) response genes. This Arabidopsis thaliana (Mouse-ear cress) protein is Probable transcriptional regulator SLK2 (SLK2).